Here is a 228-residue protein sequence, read N- to C-terminus: uncharacterized protein (228 aa).

S-adenosyl-L-methionine is bound by residues Gly-179, Ile-199, and Leu-208.

The protein belongs to the class IV-like SAM-binding methyltransferase superfamily. RNA methyltransferase TrmH family.

This is an uncharacterized protein from Borreliella burgdorferi (strain ATCC 35210 / DSM 4680 / CIP 102532 / B31) (Borrelia burgdorferi).